Reading from the N-terminus, the 278-residue chain is Formamidopyrimidine-DNA glycosylase (278 aa).

P2 acts as the Schiff-base intermediate with DNA in catalysis. E3 (proton donor) is an active-site residue. K60 acts as the Proton donor; for beta-elimination activity in catalysis. DNA is bound by residues H95 and R114. The FPG-type zinc-finger motif lies at W244–G278. Residue R268 is the Proton donor; for delta-elimination activity of the active site.

It belongs to the FPG family. Monomer. Zn(2+) serves as cofactor.

It catalyses the reaction Hydrolysis of DNA containing ring-opened 7-methylguanine residues, releasing 2,6-diamino-4-hydroxy-5-(N-methyl)formamidopyrimidine.. It carries out the reaction 2'-deoxyribonucleotide-(2'-deoxyribose 5'-phosphate)-2'-deoxyribonucleotide-DNA = a 3'-end 2'-deoxyribonucleotide-(2,3-dehydro-2,3-deoxyribose 5'-phosphate)-DNA + a 5'-end 5'-phospho-2'-deoxyribonucleoside-DNA + H(+). Involved in base excision repair of DNA damaged by oxidation or by mutagenic agents. Acts as a DNA glycosylase that recognizes and removes damaged bases. Has a preference for oxidized purines, such as 7,8-dihydro-8-oxoguanine (8-oxoG). Has AP (apurinic/apyrimidinic) lyase activity and introduces nicks in the DNA strand. Cleaves the DNA backbone by beta-delta elimination to generate a single-strand break at the site of the removed base with both 3'- and 5'-phosphates. This Parasynechococcus marenigrum (strain WH8102) protein is Formamidopyrimidine-DNA glycosylase.